Here is a 243-residue protein sequence, read N- to C-terminus: ATP synthase subunit a, chloroplastic (243 aa).

Helical transmembrane passes span 32-52 (GQVL…SFVG), 96-116 (TVFL…WALI), 129-149 (DINT…YAGI), 195-215 (LVVG…IMLL), and 216-236 (GCFT…AYIG).

This sequence belongs to the ATPase A chain family. In terms of assembly, F-type ATPases have 2 components, CF(1) - the catalytic core - and CF(0) - the membrane proton channel. CF(1) has five subunits: alpha(3), beta(3), gamma(1), delta(1), epsilon(1). CF(0) has four main subunits: a, b, b' and c.

The protein localises to the plastid. The protein resides in the chloroplast thylakoid membrane. Key component of the proton channel; it plays a direct role in the translocation of protons across the membrane. The chain is ATP synthase subunit a, chloroplastic from Tetradesmus obliquus (Green alga).